The sequence spans 2325 residues: Otogelin-like protein (2325 aa).

A signal peptide spans M1–A22. Residues G112 to V288 enclose the VWFD 1 domain. 2 disulfide bridges follow: C114–C248 and C136–C287. A glycan (N-linked (GlcNAc...) asparagine) is linked at N425. One can recognise a VWFD 2 domain in the interval V472–F645. Intrachain disulfides connect C474–C609, C496–C644, and C518–C526. Residues C736 to C791 enclose the TIL 1 domain. 2 N-linked (GlcNAc...) asparagine glycosylation sites follow: N817 and N867. The VWFD 3 domain occupies A937–E1114. 3 cysteine pairs are disulfide-bonded: C939-C1069, C961-C1113, and C983-C990. An N-linked (GlcNAc...) asparagine glycan is attached at N1280. The TIL 2 domain maps to R1366–C1418. The VWFD 4 domain occupies C1506–V1695. 2 disulfides stabilise this stretch: C1508–C1655 and C1549–C1571. 2 N-linked (GlcNAc...) asparagine glycosylation sites follow: N1576 and N2170. Intrachain disulfides connect C2233–C2289, C2254–C2303, C2265–C2320, and C2269–C2322. Residues C2233–N2325 enclose the CTCK domain. N2296 is a glycosylation site (N-linked (GlcNAc...) asparagine).

The protein belongs to the otogelin family.

The protein localises to the secreted. The protein is Otogelin-like protein (Otogl) of Mus musculus (Mouse).